Reading from the N-terminus, the 205-residue chain is Holliday junction branch migration complex subunit RuvA (205 aa).

The domain I stretch occupies residues 1-65 (MIGRLRGAVA…SAGLRLYGFL (65 aa)). The domain II stretch occupies residues 66–144 (TREDRRAFVL…TDGPVLMSAP (79 aa)). Positions 145–153 (TSSAPSAPA) are flexible linker. The domain III stretch occupies residues 153 to 205 (AKPAPTGDAVAALMGLGVAEVNARRVVEAAAAELGEEATVQALIKAGLKELGR).

The protein belongs to the RuvA family. Homotetramer. Forms an RuvA(8)-RuvB(12)-Holliday junction (HJ) complex. HJ DNA is sandwiched between 2 RuvA tetramers; dsDNA enters through RuvA and exits via RuvB. An RuvB hexamer assembles on each DNA strand where it exits the tetramer. Each RuvB hexamer is contacted by two RuvA subunits (via domain III) on 2 adjacent RuvB subunits; this complex drives branch migration. In the full resolvosome a probable DNA-RuvA(4)-RuvB(12)-RuvC(2) complex forms which resolves the HJ.

It is found in the cytoplasm. Its function is as follows. The RuvA-RuvB-RuvC complex processes Holliday junction (HJ) DNA during genetic recombination and DNA repair, while the RuvA-RuvB complex plays an important role in the rescue of blocked DNA replication forks via replication fork reversal (RFR). RuvA specifically binds to HJ cruciform DNA, conferring on it an open structure. The RuvB hexamer acts as an ATP-dependent pump, pulling dsDNA into and through the RuvAB complex. HJ branch migration allows RuvC to scan DNA until it finds its consensus sequence, where it cleaves and resolves the cruciform DNA. The sequence is that of Holliday junction branch migration complex subunit RuvA from Caulobacter vibrioides (strain ATCC 19089 / CIP 103742 / CB 15) (Caulobacter crescentus).